Consider the following 100-residue polypeptide: Urease subunit gamma (100 aa).

This sequence belongs to the urease gamma subunit family. As to quaternary structure, heterotrimer of UreA (gamma), UreB (beta) and UreC (alpha) subunits. Three heterotrimers associate to form the active enzyme.

The protein localises to the cytoplasm. It catalyses the reaction urea + 2 H2O + H(+) = hydrogencarbonate + 2 NH4(+). It participates in nitrogen metabolism; urea degradation; CO(2) and NH(3) from urea (urease route): step 1/1. This Pseudomonas aeruginosa (strain LESB58) protein is Urease subunit gamma.